The following is a 1255-amino-acid chain: Membrane-associated guanylate kinase, WW and PDZ domain-containing protein 1 (1255 aa).

Residues 17–105 (ECTVKRGPQG…AVTFKAVRQG (89 aa)) form the PDZ 1 domain. Residues 96–287 (AVTFKAVRQG…APITDPSQKF (192 aa)) enclose the Guanylate kinase-like domain. ATP is bound at residue 103 to 110 (RQGGRLNK). Disordered regions lie at residues 208 to 227 (HSLQSGSKQSTPKRTKSYND) and 235 to 265 (HTENEEEEDVPEMNSSFTADSGDQDEPTLQE). Residues 300-333 (GPLPENWEMAYTENGEVYFIDHNAKTTSWLDPRC) form the WW 1 domain. Ser-357 is modified (phosphoserine). The region spanning 359-392 (LELPAGWEKIEDPVYGVYYVDHINRKTQYENPVL) is the WW 2 domain. The interval 395–462 (KRKRQLEQQQ…QGKPFFTRNP (68 aa)) is disordered. Positions 402-414 (QQQQQQQHQQQPQ) are enriched in low complexity. Residues 434-444 (PVAPSHPPSNP) show a composition bias toward pro residues. Residues 471 to 553 (HTKLRKSSRG…GASVDLELCR (83 aa)) form the PDZ 2 domain. The span at 585–601 (QETYDSPASHSSKTGKV) shows a compositional bias: polar residues. 2 disordered regions span residues 585–622 (QETYDSPASHSSKTGKVSNMKDARPSSPADVASNSSHG) and 719–820 (QRGG…GERD). In terms of domain architecture, PDZ 3 spans 642–720 (TVHIVKGPMG…GSEVTLLVQR (79 aa)). Ser-729 and Ser-740 each carry phosphoserine. Residues 741-755 (QNSSQHSVSSLRSLH) are compositionally biased toward low complexity. Phosphoserine is present on Ser-799. The PDZ 4 domain occupies 840–922 (DIFLWRKETG…QGHVNLTVRR (83 aa)). The tract at residues 932 to 984 (ENEVPSPASSHHSSNQPASLTEEKRTPQGSQNSLNTVSSGSGSTSGIGSGGGG) is disordered. Polar residues-rich tracts occupy residues 938 to 950 (PASSHHSSNQPAS) and 958 to 967 (PQGSQNSLNT). A compositionally biased stretch (gly residues) spans 974–984 (STSGIGSGGGG). The region spanning 997–1093 (DVEIRRGENE…TVTLRIIPGD (97 aa)) is the PDZ 5 domain. A Phosphoserine modification is found at Ser-1070. Residues 1111–1129 (TTTHAPSQQGTQETRTTTK) show a composition bias toward polar residues. The disordered stretch occupies residues 1111-1142 (TTTHAPSQQGTQETRTTTKPKPDSQFEFKGPQ). The PDZ 6 domain occupies 1151 to 1233 (TVELERGAKG…RVRLFLRRGD (83 aa)).

Part of a complex composed of AMOTL2, MAGI1 and CDH5, within the complex AMOTL2 acts as a scaffold protein for the interaction of MAGI1 with CDH5. The complex is required for coupling actin fibers to cell junctions in endothelial cells. Interacts through its WW 2 domain with SYNPO and through its PDZ 5 domain with ACTN4. Interacts with cytoplasmic domain of ADGRB1. Interacts via its WW domains with DRPLA. Interacts with ESAM, LRP2 and CXADR. May interact with CTNNB1. Interacts through its PDZ 1 domain with NET1. Interacts with ASIC3 and AMOT. Interacts with FCHSD2. Interacts with IGSF5/JAM4 and through its PDZ 2 and 3 domains with NPHS1 forming a tripartite complex. Interacts with DDN. May interact (via PDZ domain) with RAPGEF2. Interacts with DLL1. Interacts with KCNJ10 and possibly with KCNJ10/KCNJ16 heterodimer; this interaction may facilitate KCNJ10/KCNJ16 potassium channel expression at the basolateral membrane in kidney tubular cells. Interacts with PRRG4 (via cytoplasmic domain).

It is found in the cell junction. Its subcellular location is the tight junction. The protein resides in the cytoplasm. The protein localises to the membrane. Plays a role in coupling actin fibers to cell junctions in endothelial cells, via its interaction with AMOTL2 and CDH5. May regulate acid-induced ASIC3 currents by modulating its expression at the cell surface. The chain is Membrane-associated guanylate kinase, WW and PDZ domain-containing protein 1 (Magi1) from Rattus norvegicus (Rat).